The primary structure comprises 451 residues: Uronate isomerase (451 aa).

The protein belongs to the metallo-dependent hydrolases superfamily. Uronate isomerase family.

It catalyses the reaction D-glucuronate = D-fructuronate. The catalysed reaction is aldehydo-D-galacturonate = keto-D-tagaturonate. The protein operates within carbohydrate metabolism; pentose and glucuronate interconversion. The protein is Uronate isomerase of Thermotoga neapolitana (strain ATCC 49049 / DSM 4359 / NBRC 107923 / NS-E).